Reading from the N-terminus, the 328-residue chain is Tetraacyldisaccharide 4'-kinase (328 aa).

55–62 (TAGGNGKT) lines the ATP pocket.

The protein belongs to the LpxK family.

It carries out the reaction a lipid A disaccharide + ATP = a lipid IVA + ADP + H(+). The protein operates within glycolipid biosynthesis; lipid IV(A) biosynthesis; lipid IV(A) from (3R)-3-hydroxytetradecanoyl-[acyl-carrier-protein] and UDP-N-acetyl-alpha-D-glucosamine: step 6/6. Functionally, transfers the gamma-phosphate of ATP to the 4'-position of a tetraacyldisaccharide 1-phosphate intermediate (termed DS-1-P) to form tetraacyldisaccharide 1,4'-bis-phosphate (lipid IVA). The protein is Tetraacyldisaccharide 4'-kinase of Shigella boydii serotype 4 (strain Sb227).